The chain runs to 410 residues: Lissencephaly-1 homolog A (410 aa).

The region spanning 7-39 is the LisH domain; the sequence is QRDELNRAIADYLRSNGYEEAYSVFKKEAELDM. A coiled-coil region spans residues 56–83; that stretch reads TSVIRLQKKVMELESKLNEAKEEINIGG. WD repeat units lie at residues 106–145, 148–187, 190–229, 232–271, 274–333, 336–375, and 378–410; these read GHRSPVTRVIFHPVFSVIVSASEDATIKVWDHETGDFERT, GHTDSVQDISFDHTGKLLASCSADMTIKLWDFQGFECIRT, GHDHNVSSVAIMPNGDHIVSASRDKTIKMWEVATGYCVKT, GHREWVRMVRPNQDGTLIASSSNDQTVRVWVVATKECKAE, EHEH…CLMT, GHDNWVRGVLVHPGGKYIVSCADDKTLRIWDYKNKRCTKT, and AHEHFVTSLDFHKTAPYVVTGSVDQTVKVWECR.

It belongs to the WD repeat LIS1/nudF family. As to quaternary structure, can self-associate. Component of the cytosolic PAF-AH (I) heterotetrameric enzyme, which is composed of PAFAH1B1 (beta), PAFAH1B2 (alpha2) and PAFAH1B3 (alpha1) subunits. The catalytic activity of the enzyme resides in the alpha1 (PAFAH1B3) and alpha2 (PAFAH1B2) subunits, whereas the beta subunit (PAFAH1B1) has regulatory activity. Trimer formation is not essential for the catalytic activity. Interacts with dynein, dynactin, nde1 and ndel1.

The protein resides in the cytoplasm. It localises to the cytoskeleton. Its subcellular location is the microtubule organizing center. The protein localises to the centrosome. Its function is as follows. Regulatory subunit (beta subunit) of the cytosolic type I platelet-activating factor (PAF) acetylhydrolase (PAF-AH (I)), an enzyme that catalyzes the hydrolyze of the acetyl group at the sn-2 position of PAF and its analogs and participates in PAF inactivation. Regulates the PAF-AH (I) activity in a catalytic dimer composition-dependent manner. Positively regulates the activity of the minus-end directed microtubule motor protein dynein. May enhance dynein-mediated microtubule sliding by targeting dynein to the microtubule plus end. Required for several dynein- and microtubule-dependent processes such as the maintenance of Golgi integrity, the peripheral transport of microtubule fragments and the coupling of the nucleus and centrosome. May be required for proliferation of neuronal precursors and neuronal migration. This chain is Lissencephaly-1 homolog A (pafah1b1a), found in Danio rerio (Zebrafish).